Consider the following 160-residue polypeptide: Protein-export protein SecB (160 aa).

The protein belongs to the SecB family. In terms of assembly, homotetramer, a dimer of dimers. One homotetramer interacts with 1 SecA dimer.

The protein localises to the cytoplasm. Functionally, one of the proteins required for the normal export of preproteins out of the cell cytoplasm. It is a molecular chaperone that binds to a subset of precursor proteins, maintaining them in a translocation-competent state. It also specifically binds to its receptor SecA. The polypeptide is Protein-export protein SecB (Burkholderia multivorans (strain ATCC 17616 / 249)).